We begin with the raw amino-acid sequence, 1208 residues long: Lysine-specific demethylase JMJ17 (1208 aa).

A PHD-type 1; degenerate zinc finger spans residues 1-36 (MLLCDSCNKGWHIYCLSPPLKHIPLGNWYCLECLNT). Zn(2+) is bound by residues Cys-4, Cys-7, Cys-30, and Cys-33. The region spanning 126 to 292 (EYCGSPWNLN…YGGSGAELYR (167 aa)) is the JmjC domain. Positions 172, 174, and 260 each coordinate Fe cation. Positions 369, 372, 383, 385, 392, 395, 400, and 402 each coordinate Zn(2+). The segment at 369 to 421 (CIICQQFLHLSAIVCNCRPSVFACLEHWKHLCECEPTKLRLEYRYTLAELDMM) adopts a C5HC2 zinc-finger fold. A Nuclear localization signal motif is present at residues 613-620 (SKKISSAK). The segment at 1099–1145 (MLHCICLKPYNSRSMVSCSQCGEWYHTYCLKLHWRPKAYVCSACCPL) adopts a PHD-type 2 zinc-finger fold. Residues Cys-1102, Cys-1104, Cys-1116, Cys-1119, His-1124, Cys-1127, Cys-1139, and Cys-1142 each contribute to the Zn(2+) site.

Belongs to the JARID1 histone demethylase family. Requires Fe(2+) as cofactor. Expressed in inflorescences, roots, seedlings and siliques, and, at low levels, in leaves and stems.

The protein resides in the nucleus. It carries out the reaction N(6),N(6),N(6)-trimethyl-L-lysyl(4)-[histone H3] + 2-oxoglutarate + O2 = N(6),N(6)-dimethyl-L-lysyl(4)-[histone H3] + formaldehyde + succinate + CO2. The catalysed reaction is N(6),N(6)-dimethyl-L-lysyl(4)-[histone H3] + 2-oxoglutarate + O2 = N(6)-methyl-L-lysyl(4)-[histone H3] + formaldehyde + succinate + CO2. The enzyme catalyses N(6)-methyl-L-lysyl(4)-[histone H3] + 2-oxoglutarate + O2 = L-lysyl(4)-[histone H3] + formaldehyde + succinate + CO2. It catalyses the reaction N(6),N(6),N(6)-trimethyl-L-lysyl(4)-[histone H3] + 3 2-oxoglutarate + 3 O2 = L-lysyl(4)-[histone H3] + 3 formaldehyde + 3 succinate + 3 CO2. Its function is as follows. Functions as a histone H3 'Lys-4' (H3K4me) demethylase involved in the regulation of gene expression. Active on H3K4me1, H3K4me2 and H3K4me3. Repressor of the abscisic acid (ABA) signaling pathway, especially during stomatal closure regulation. Negative regulator of responses to dehydration stress by binding directly to the chromatin of SRK2E/OST1 and demethylating H3K4me3 to regulates its expression. Together with JMJ14 and JMJ16, required for plant growth and development. This is Lysine-specific demethylase JMJ17 from Arabidopsis thaliana (Mouse-ear cress).